The primary structure comprises 628 residues: Biosynthetic arginine decarboxylase (628 aa).

The residue at position 99 (Lys-99) is an N6-(pyridoxal phosphate)lysine. 279–289 contacts substrate; the sequence is VDVGGGLGIDY.

This sequence belongs to the Orn/Lys/Arg decarboxylase class-II family. SpeA subfamily. Mg(2+) is required as a cofactor. It depends on pyridoxal 5'-phosphate as a cofactor.

It carries out the reaction L-arginine + H(+) = agmatine + CO2. In terms of biological role, catalyzes the biosynthesis of agmatine from arginine. This Xanthomonas axonopodis pv. citri (strain 306) protein is Biosynthetic arginine decarboxylase.